The sequence spans 304 residues: ADP-ribosyl cyclase/cyclic ADP-ribose hydrolase 1 (304 aa).

At 1–21 (MANYEFSQVSGDRPGCRLSRK) the chain is on the cytoplasmic side. A helical; Signal-anchor for type II membrane protein membrane pass occupies residues 22-44 (AQIGLGVGLLVLIALVVGIVVIL). Over 45–304 (LRPRSLLVWT…PEHPSCRLNT (260 aa)) the chain is Extracellular. 3 cysteine pairs are disulfide-bonded: C70/C86, C103/C184, and C164/C177. A glycan (N-linked (GlcNAc...) asparagine) is linked at N104. The active site involves C123. An N-linked (GlcNAc...) asparagine glycan is attached at N124. C205 is an active-site residue. N213 and N223 each carry an N-linked (GlcNAc...) asparagine glycan. 2 disulfides stabilise this stretch: C258–C279 and C291–C300.

This sequence belongs to the ADP-ribosyl cyclase family. In terms of assembly, homodimer.

It is found in the membrane. The catalysed reaction is NAD(+) = cyclic ADP-beta-D-ribose + nicotinamide + H(+). The enzyme catalyses nicotinate + NADP(+) = nicotinate-adenine dinucleotide phosphate + nicotinamide. It catalyses the reaction NAD(+) + H2O = ADP-D-ribose + nicotinamide + H(+). Its function is as follows. Synthesizes the second messengers cyclic ADP-ribose (cADPR) and nicotinate-adenine dinucleotide phosphate (NAADP), the former a second messenger for glucose-induced insulin secretion, the latter a Ca(2+) mobilizer. Also has cADPR hydrolase activity. The protein is ADP-ribosyl cyclase/cyclic ADP-ribose hydrolase 1 (Cd38) of Mus musculus (Mouse).